The primary structure comprises 250 residues: Accessory gland-specific peptide 26Aa (250 aa).

An N-terminal signal peptide occupies residues 1 to 18 (MNQILLCSQILLLFFTVA). The interval 79–100 (DYPINNSKSRKNSSTLPSPILT) is disordered. A compositionally biased stretch (polar residues) spans 82–95 (INNSKSRKNSSTLP). N-linked (GlcNAc...) asparagine glycans are attached at residues Asn83, Asn90, and Asn131. Disordered regions lie at residues 172–191 (NVQN…SKDI) and 230–250 (NNPA…PSTT). Over residues 178 to 187 (KSTKSCKKRP) the composition is skewed to basic residues. The segment covering 240–250 (KSPSEGNPSTT) has biased composition (polar residues).

In terms of processing, proteolytically cleaved as it is secreted and in the recipient female. As to expression, main cells of the accessory glands of males.

The protein resides in the secreted. The protein localises to the extracellular space. In terms of biological role, this protein is transferred from male to female's hemolymph during mating, affecting egglaying and behavior after mating. The chain is Accessory gland-specific peptide 26Aa (Acp26Aa) from Drosophila mauritiana (Fruit fly).